We begin with the raw amino-acid sequence, 164 residues long: UPF0303 protein Smed_2872 (164 aa).

This sequence belongs to the UPF0303 family.

The protein is UPF0303 protein Smed_2872 of Sinorhizobium medicae (strain WSM419) (Ensifer medicae).